The following is a 463-amino-acid chain: Elongation factor 1-alpha (463 aa).

The tr-type G domain occupies 5–242 (KVHINIVVIG…DSIIPPQRPT (238 aa)). Residues 14 to 21 (GHVDSGKS) are G1. Residue 14–21 (GHVDSGKS) coordinates GTP. The interval 70–74 (GITID) is G2. The segment at 91–94 (DAPG) is G3. Residues 91 to 95 (DAPGH) and 153 to 156 (NKMD) each bind GTP. Residues 153–156 (NKMD) form a G4 region. A G5 region spans residues 194–196 (SGF). Glutamate 301 and glutamate 374 each carry 5-glutamyl glycerylphosphorylethanolamine. A disordered region spans residues 443–463 (KSDGSSGKVTKSAQKAAPKKK). The span at 446-455 (GSSGKVTKSA) shows a compositional bias: polar residues.

It belongs to the TRAFAC class translation factor GTPase superfamily. Classic translation factor GTPase family. EF-Tu/EF-1A subfamily.

It localises to the cytoplasm. Functionally, this protein promotes the GTP-dependent binding of aminoacyl-tRNA to the A-site of ribosomes during protein biosynthesis. The protein is Elongation factor 1-alpha of Caenorhabditis elegans.